The chain runs to 227 residues: MIMKTYFSGVSTLGVHSLATEDYGFFPLSVDQKTMERMKNVLDIPATQLNISNSSLIGSLCVGNSNGLLVPDITTEKEVELIKMFLKENSLDVNLERLKAKNTAFGNLILTNNKGCIISEELSRFRKTIEDVLDVESGVGNYAELATVGSNGVATDKGCLVHPLTDELELEWIQNILRVDYVERGTANRGVTSVGACILANSKGAVVGGDTSGPEILKIEEALDLID.

The protein belongs to the eIF-6 family.

Binds to the 50S ribosomal subunit and prevents its association with the 30S ribosomal subunit to form the 70S initiation complex. The sequence is that of Translation initiation factor 6 from Methanococcus maripaludis (strain C6 / ATCC BAA-1332).